Reading from the N-terminus, the 116-residue chain is Peptidyl-tRNA hydrolase (116 aa).

The protein belongs to the PTH2 family.

Its subcellular location is the cytoplasm. It catalyses the reaction an N-acyl-L-alpha-aminoacyl-tRNA + H2O = an N-acyl-L-amino acid + a tRNA + H(+). The natural substrate for this enzyme may be peptidyl-tRNAs which drop off the ribosome during protein synthesis. In Methanococcus vannielii (strain ATCC 35089 / DSM 1224 / JCM 13029 / OCM 148 / SB), this protein is Peptidyl-tRNA hydrolase.